Reading from the N-terminus, the 444-residue chain is Ribosomal protein uS12 methylthiotransferase RimO (444 aa).

The 117-residue stretch at 3 to 119 folds into the MTTase N-terminal domain; sequence IKIGLVSLGC…IARAVRRVLE (117 aa). [4Fe-4S] cluster is bound by residues cysteine 12, cysteine 48, cysteine 82, cysteine 156, cysteine 160, and cysteine 163. Positions 142–372 constitute a Radical SAM core domain; that stretch reads ATPPYTAYLK…MMLQQEISLQ (231 aa). A TRAM domain is found at 375–444; sequence LKRVGEVIEV…EYDLTGETVL (70 aa).

The protein belongs to the methylthiotransferase family. RimO subfamily. The cofactor is [4Fe-4S] cluster.

Its subcellular location is the cytoplasm. The catalysed reaction is L-aspartate(89)-[ribosomal protein uS12]-hydrogen + (sulfur carrier)-SH + AH2 + 2 S-adenosyl-L-methionine = 3-methylsulfanyl-L-aspartate(89)-[ribosomal protein uS12]-hydrogen + (sulfur carrier)-H + 5'-deoxyadenosine + L-methionine + A + S-adenosyl-L-homocysteine + 2 H(+). In terms of biological role, catalyzes the methylthiolation of an aspartic acid residue of ribosomal protein uS12. This is Ribosomal protein uS12 methylthiotransferase RimO from Pelotomaculum thermopropionicum (strain DSM 13744 / JCM 10971 / SI).